The sequence spans 238 residues: Ribonuclease PH (238 aa).

Phosphate is bound by residues R86 and 124 to 126; that span reads GTR.

Belongs to the RNase PH family. Homohexameric ring arranged as a trimer of dimers.

It catalyses the reaction tRNA(n+1) + phosphate = tRNA(n) + a ribonucleoside 5'-diphosphate. Functionally, phosphorolytic 3'-5' exoribonuclease that plays an important role in tRNA 3'-end maturation. Removes nucleotide residues following the 3'-CCA terminus of tRNAs; can also add nucleotides to the ends of RNA molecules by using nucleoside diphosphates as substrates, but this may not be physiologically important. Probably plays a role in initiation of 16S rRNA degradation (leading to ribosome degradation) during starvation. This chain is Ribonuclease PH, found in Brucella abortus (strain S19).